Consider the following 129-residue polypeptide: Small ribosomal subunit protein uS11 (129 aa).

The protein belongs to the universal ribosomal protein uS11 family. In terms of assembly, part of the 30S ribosomal subunit. Interacts with proteins S7 and S18. Binds to IF-3.

Located on the platform of the 30S subunit, it bridges several disparate RNA helices of the 16S rRNA. Forms part of the Shine-Dalgarno cleft in the 70S ribosome. In Desulfitobacterium hafniense (strain DSM 10664 / DCB-2), this protein is Small ribosomal subunit protein uS11.